Consider the following 266-residue polypeptide: UPF0294 protein YafD (266 aa).

Belongs to the UPF0294 family.

The protein resides in the cytoplasm. This chain is UPF0294 protein YafD, found in Salmonella paratyphi C (strain RKS4594).